Here is a 117-residue protein sequence, read N- to C-terminus: Ig heavy chain V region J558 (117 aa).

The region spanning 1 to 116 is the Ig-like domain; it reads EVQLQQSGPE…WGAGTTVTVS (116 aa). Cys22 and Cys96 form a disulfide bridge.

In Mus musculus (Mouse), this protein is Ig heavy chain V region J558.